Consider the following 196-residue polypeptide: MESHKPSTSKDDLILNIISRKIKQLPESDRNLLEYGSAYIGLNAAFGGLIANSLFRRILNVTQARLASSLPMAVIPFLTANLSYQSLVSLPLSTGDLNCETCTTTRGALVGLVMGGLYPILLAIPVNGGLAARYESSPLPQRGNIFNYWITVSKPVFRKMLFPTLLQTVFASYLGSRQYKLLIKALQLPEPDLEIH.

The Mitochondrial matrix segment spans residues 1–34 (MESHKPSTSKDDLILNIISRKIKQLPESDRNLLE). A helical membrane pass occupies residues 35-55 (YGSAYIGLNAAFGGLIANSLF). The Mitochondrial intermembrane portion of the chain corresponds to 56 to 57 (RR). The chain crosses the membrane as a helical span at residues 58 to 78 (ILNVTQARLASSLPMAVIPFL). At 79–106 (TANLSYQSLVSLPLSTGDLNCETCTTTR) the chain is on the mitochondrial matrix side. A helical transmembrane segment spans residues 107-127 (GALVGLVMGGLYPILLAIPVN). The Mitochondrial intermembrane segment spans residues 128–159 (GGLAARYESSPLPQRGNIFNYWITVSKPVFRK). The helical transmembrane segment at 160–176 (MLFPTLLQTVFASYLGS) threads the bilayer. Residues 177–196 (RQYKLLIKALQLPEPDLEIH) are Mitochondrial matrix-facing.

The protein belongs to the TMEM126 family. Interacts with OXA1L; promoting cotranslational quality control in mitochondria. In terms of tissue distribution, in the retina, significant levels of expression are detected in the ganglion cell layer, the optic nerve head, the outer plexiform layer, and in the outer ellipsoide length of photoreceptor inner segments.

It is found in the mitochondrion inner membrane. Its function is as follows. Protein required for the cotranslational protein quality control in the inner membrane of the mitochondria. Associates with newly synthesized polypeptides and may act as a chaperone that cooperates with OXA1L for the insertion of newly synthesized mitochondrial proteins into the inner membrane. Required for the assembly of the ND4 module of mitochondrial complex I. The protein is Transmembrane protein 126A of Mus musculus (Mouse).